The following is a 497-amino-acid chain: POU domain, class 3, transcription factor 3 (497 aa).

The span at G31 to Q51 shows a compositional bias: gly residues. Disordered stretches follow at residues G31–Y62, W121–A189, N230–S316, and E458–Q497. Composition is skewed to pro residues over residues Q133 to G145 and H170 to Q180. Residues G240 to A250 are compositionally biased toward gly residues. Basic residues predominate over residues H269–H286. One can recognise a POU-specific domain in the interval E311–D385. The segment at residues K403–T462 is a DNA-binding region (homeobox). Polar residues predominate over residues G465–A483.

It belongs to the POU transcription factor family. Class-3 subfamily. As to quaternary structure, homodimer. In terms of tissue distribution, brain.

Its subcellular location is the nucleus. Its function is as follows. Transcription factor that acts synergistically with SOX11 and SOX4. Plays a role in neuronal development. Is implicated in an enhancer activity at the embryonic met-mesencephalic junction; the enhancer element contains the octamer motif (5'-ATTTGCAT-3'). This is POU domain, class 3, transcription factor 3 (Pou3f3) from Rattus norvegicus (Rat).